The sequence spans 686 residues: Pentatricopeptide repeat-containing protein 1, mitochondrial (686 aa).

Positions 55-67 are enriched in polar residues; the sequence is RMSSLCSDSSTPV. Positions 55 to 79 are disordered; the sequence is RMSSLCSDSSTPVAPQEEEEEESFG. PPR repeat units lie at residues 124–160, 161–195, 196–234, 235–269, and 270–306; these read TPYW…RLQP, LECN…DLEP, SDAT…NFQL, NLKT…GHAV, and TEET…GIKP. The tract at residues 383–407 is disordered; the sequence is KLEGPPAFPEARETSRTQPEVETKA. Basic and acidic residues predominate over residues 392 to 407; the sequence is EARETSRTQPEVETKA. 2 PPR repeats span residues 508–542 and 575–609; these read DITF…GIVP and NTHI…SVPV.

This sequence belongs to the PTCD1 family. In terms of assembly, associates with mitochondrial leucine tRNAs. Interacts with ELAC2.

The protein resides in the mitochondrion matrix. In terms of biological role, mitochondrial protein implicated in negative regulation of leucine tRNA levels, as well as negative regulation of mitochondria-encoded proteins and COX activity. Also affects the 3'-processing of mitochondrial tRNAs. The protein is Pentatricopeptide repeat-containing protein 1, mitochondrial (Ptcd1) of Rattus norvegicus (Rat).